We begin with the raw amino-acid sequence, 336 residues long: SCP domain-containing protein 1 (336 aa).

Positions 1-18 are cleaved as a signal peptide; sequence MEFKLLLVLCFNIGLICS. N-linked (GlcNAc...) asparagine glycosylation occurs at asparagine 47. The span at 73–85 shows a compositional bias: polar residues; the sequence is QGGNTAPSSSLPG. The interval 73–94 is disordered; it reads QGGNTAPSSSLPGVSSMPMPSA. An SCP domain is found at 175 to 292; that stretch reads LEEHNKFRSD…YCGDMSFIAC (118 aa). N-linked (GlcNAc...) asparagine glycans are attached at residues asparagine 213 and asparagine 257.

As to expression, component of the acid-insoluble and acid-soluble organic matrix of calcified layers of the shell (at protein level).

The protein resides in the secreted. The protein is SCP domain-containing protein 1 of Lottia gigantea (Giant owl limpet).